The chain runs to 154 residues: Ribosome maturation factor RimP (154 aa).

The protein belongs to the RimP family.

Its subcellular location is the cytoplasm. In terms of biological role, required for maturation of 30S ribosomal subunits. This Natranaerobius thermophilus (strain ATCC BAA-1301 / DSM 18059 / JW/NM-WN-LF) protein is Ribosome maturation factor RimP.